The chain runs to 382 residues: Na(+)/H(+) antiporter NhaA (382 aa).

Helical transmembrane passes span 5 to 25, 42 to 62, 88 to 108, 116 to 136, 145 to 165, 169 to 189, 261 to 281, 282 to 302, 327 to 347, and 353 to 373; these read INLL…ALAW, FGGV…FFGI, LATL…NAVI, GWGI…RLVF, FLLL…AVFY, VHPT…AAYI, IVVD…RFSS, VGTA…AGIL, TGLV…VAFV, and GAAK…VALG.

Belongs to the NhaA Na(+)/H(+) (TC 2.A.33) antiporter family.

It localises to the cell inner membrane. It catalyses the reaction Na(+)(in) + 2 H(+)(out) = Na(+)(out) + 2 H(+)(in). Its function is as follows. Na(+)/H(+) antiporter that extrudes sodium in exchange for external protons. This chain is Na(+)/H(+) antiporter NhaA, found in Geobacter metallireducens (strain ATCC 53774 / DSM 7210 / GS-15).